We begin with the raw amino-acid sequence, 133 residues long: Ribonuclease VapC1 (133 aa).

Mg(2+) is bound by residues Asp7 and Asp98.

This sequence belongs to the PINc/VapC protein family. Mg(2+) is required as a cofactor.

Functionally, toxic component of a type II toxin-antitoxin (TA) system. The cognate antitoxin is VapB1. The polypeptide is Ribonuclease VapC1 (Mycobacterium tuberculosis (strain CDC 1551 / Oshkosh)).